Here is a 288-residue protein sequence, read N- to C-terminus: ATP phosphoribosyltransferase (288 aa).

Belongs to the ATP phosphoribosyltransferase family. Long subfamily. Requires Mg(2+) as cofactor.

Its subcellular location is the cytoplasm. The enzyme catalyses 1-(5-phospho-beta-D-ribosyl)-ATP + diphosphate = 5-phospho-alpha-D-ribose 1-diphosphate + ATP. Its pathway is amino-acid biosynthesis; L-histidine biosynthesis; L-histidine from 5-phospho-alpha-D-ribose 1-diphosphate: step 1/9. Feedback inhibited by histidine. In terms of biological role, catalyzes the condensation of ATP and 5-phosphoribose 1-diphosphate to form N'-(5'-phosphoribosyl)-ATP (PR-ATP). Has a crucial role in the pathway because the rate of histidine biosynthesis seems to be controlled primarily by regulation of HisG enzymatic activity. The polypeptide is ATP phosphoribosyltransferase (Methanococcus maripaludis (strain C7 / ATCC BAA-1331)).